The chain runs to 252 residues: MSDWNPSLYLHFAAERSRPAVELLARVPLENVEYVADLGCGPGNSTALLHQRWPAARITGIDSSPAMIAEARSALPDCQFVEADIRNWQPEQALDLIFANASLQWLPDHYELFPHLVSLLNPQGVLAVQMPDNWLEPTHVLMREVAWEQNYSDRGREPLAGVHAYYDILSEAGCEVDIWRTTYYHQMPSRQAIIDWVTATGLRPWLQDLTESEQQLFLTRYHQMLEEQYPLQENGQILLAFPRLFIVARRTE.

The protein belongs to the methyltransferase superfamily. Tam family.

Its subcellular location is the cytoplasm. The enzyme catalyses trans-aconitate + S-adenosyl-L-methionine = (E)-3-(methoxycarbonyl)pent-2-enedioate + S-adenosyl-L-homocysteine. Catalyzes the S-adenosylmethionine monomethyl esterification of trans-aconitate. The sequence is that of Trans-aconitate 2-methyltransferase from Shigella dysenteriae serotype 1 (strain Sd197).